The following is an 890-amino-acid chain: Phosphotransferase RcsD (890 aa).

Topologically, residues 1–21 (MRQKETTATTRFSLLPGSITR) are cytoplasmic. Residues 22–42 (FFLLLIIVLLVTMGVMVQSAV) traverse the membrane as a helical segment. The Periplasmic portion of the chain corresponds to 43–308 (NAWLKDKSYQ…GTLLLDTLQN (266 aa)). The chain crosses the membrane as a helical span at residues 309 to 329 (ILLPLLLNIGLLALALFGYTT). Topologically, residues 330–890 (FRHFSSRSTE…DIDSYVKSLL (561 aa)) are cytoplasmic. A histidine-like kinase region spans residues 468–678 (NIGDALKEPA…RYSVHIKMLA (211 aa)). The HPt domain maps to 803-890 (AQLHASGYYA…DIDSYVKSLL (88 aa)). A Phosphohistidine modification is found at His842.

The protein belongs to the RcsD family. Interacts with RcsC and RcsB. Has a higher affinity for RcsB than for RcsC. Phosphorylated by RcsC.

The protein resides in the cell inner membrane. Component of the Rcs signaling system, which controls transcription of numerous genes. RcsD is a phosphotransfer intermediate between the sensor kinase RcsC and the response regulator RcsB. It acquires a phosphoryl group from RcsC and transfers it to RcsB. The system controls expression of genes involved in colanic acid capsule synthesis, biofilm formation and cell division. This Escherichia coli (strain K12) protein is Phosphotransferase RcsD.